The following is a 232-amino-acid chain: Putative N-acetylmannosamine-6-phosphate 2-epimerase (232 aa).

This sequence belongs to the NanE family.

It carries out the reaction an N-acyl-D-glucosamine 6-phosphate = an N-acyl-D-mannosamine 6-phosphate. It participates in amino-sugar metabolism; N-acetylneuraminate degradation; D-fructose 6-phosphate from N-acetylneuraminate: step 3/5. In terms of biological role, converts N-acetylmannosamine-6-phosphate (ManNAc-6-P) to N-acetylglucosamine-6-phosphate (GlcNAc-6-P). The chain is Putative N-acetylmannosamine-6-phosphate 2-epimerase from Borrelia garinii subsp. bavariensis (strain ATCC BAA-2496 / DSM 23469 / PBi) (Borreliella bavariensis).